A 319-amino-acid polypeptide reads, in one-letter code: tRNA dimethylallyltransferase (319 aa).

11 to 18 contributes to the ATP binding site; it reads GPTCSGKS. 13 to 18 provides a ligand contact to substrate; the sequence is TCSGKS. Interaction with substrate tRNA regions lie at residues 36 to 39 and 160 to 164; these read DSMQ and QRIAR.

This sequence belongs to the IPP transferase family. Monomer. Requires Mg(2+) as cofactor.

It carries out the reaction adenosine(37) in tRNA + dimethylallyl diphosphate = N(6)-dimethylallyladenosine(37) in tRNA + diphosphate. Catalyzes the transfer of a dimethylallyl group onto the adenine at position 37 in tRNAs that read codons beginning with uridine, leading to the formation of N6-(dimethylallyl)adenosine (i(6)A). The sequence is that of tRNA dimethylallyltransferase from Granulibacter bethesdensis (strain ATCC BAA-1260 / CGDNIH1).